Here is a 317-residue protein sequence, read N- to C-terminus: Taste receptor type 2 member 14 (317 aa).

The Extracellular portion of the chain corresponds to 1-7 (MGGVIKS). The chain crosses the membrane as a helical span at residues 8–28 (IFTFVLIVEFIIGNLGNSFIA). At 29-55 (LVNCIDWVKGRKISSVDRILTALAISR) the chain is on the cytoplasmic side. Residues 56-76 (ISLVWLIFGSWCVSVFFPALF) form a helical membrane-spanning segment. At 77–87 (ATEKMFRMLTN) the chain is on the extracellular side. The cholesterol site is built by threonine 86 and tryptophan 89. Residues 88-108 (IWTVINHFSVWLATGLGTFYF) form a helical membrane-spanning segment. Residues 109–129 (LKIANFSNSIFLYLKWRVKKV) are Cytoplasmic-facing. A helical membrane pass occupies residues 130–150 (VLVLLLVTSVFLFLNIALINI). At 151–184 (HINASINGYRRNKTCSSDSSNFTRFSSLIVLTST) the chain is on the extracellular side. N-linked (GlcNAc...) asparagine glycosylation is found at asparagine 153, asparagine 162, and asparagine 171. A cholesterol-binding site is contributed by valine 180. A helical transmembrane segment spans residues 185–205 (VFIFIPFTLSLAMFLLLIFSM). Topologically, residues 206–232 (WKHRKKMQHTVKISGDASTKAHRGVKS) are cytoplasmic. The chain crosses the membrane as a helical span at residues 233-253 (VITFFLLYAIFSLSFFISVWT). The Extracellular segment spans residues 254–261 (SERLEENL). Residues 262-282 (IILSQVMGMAYPSCHSCVLIL) form a helical membrane-spanning segment. The cholesterol site is built by serine 265 and methionine 268. At 283 to 317 (GNKKLRQASLSVLLWLRYMFKDGEPSGHKEFRESS) the chain is on the cytoplasmic side.

This sequence belongs to the G-protein coupled receptor T2R family. Core component of the TAS2R14-GNAI1 complex, consisting of TAS2R14, GNAI1, GNB1 and GNG2; within the complex interacts with GNAI1. Core component of the TAS2R14-GNAT3 complex, consisting of TAS2R14, GNAT3, GNB1 and GNG2; within the complex interacts with GNAT3. Core component of the TAS2R14-GNAS2 complex, consisting of TAS2R14, GNAS2, GNB1 and GNG2; within the complex interacts with GNAS2. Highly expressed in cerebellum, pancreas, small intestine and thymus; also expressed in adipose, aorta, skin and tongue, but at significantly lower levels. Expressed in subsets of taste receptor cells of the tongue and palate epithelium and exclusively in gustducin-positive cells. Expressed in testis.

Its subcellular location is the membrane. The enzyme catalyses Ca(2+)(in) = Ca(2+)(out). It carries out the reaction 3',5'-cyclic AMP(in) = 3',5'-cyclic AMP(out). Basal activity is enhanced by binding to bitter tastants, such as flufenamic acid and aristolochic acid. Regulated by cholesterol in a concentration-dependent manner. Its function is as follows. Gustducin-linked G-protein coupled receptor that plays a role in the perception of bitterness. The activity of this receptor stimulates GNAT3, activating the gustducin G-protein pathway. Likely plays a role in sensing the chemical composition of the gastrointestinal content and other extra-oral tissues via the inhibitory G-protein pathways. The protein is Taste receptor type 2 member 14 (TAS2R14) of Homo sapiens (Human).